The chain runs to 354 residues: uncharacterized protein (354 aa).

Residues leucine 43–valine 63 traverse the membrane as a helical segment.

The protein resides in the cell membrane. This is an uncharacterized protein from Bacillus subtilis (strain 168).